A 418-amino-acid polypeptide reads, in one-letter code: Gene 68 protein (418 aa).

Disordered regions lie at residues 230-304 and 353-418; these read IPAP…IHTL and DTFE…ERRA. The segment covering 241–250 has biased composition (basic and acidic residues); sequence RPSEGGDARP. Over residues 257-266 the composition is skewed to basic residues; that stretch reads SRARSVHGRR. Basic and acidic residues predominate over residues 353–369; the sequence is DTFEDNRRDELRHDDSR. The segment covering 395 to 404 has biased composition (basic residues); that stretch reads PHLRRSRGRG.

This sequence belongs to the herpesviridae US2 family.

This is Gene 68 protein from Equine herpesvirus 1 (strain Ab4p) (EHV-1).